The sequence spans 157 residues: Putative 4-hydroxy-4-methyl-2-oxoglutarate aldolase (157 aa).

Residues 78 to 81 (GDVI) and Arg-100 contribute to the substrate site. Asp-101 serves as a coordination point for a divalent metal cation.

The protein belongs to the class II aldolase/RraA-like family. Homotrimer. A divalent metal cation serves as cofactor.

It carries out the reaction 4-hydroxy-4-methyl-2-oxoglutarate = 2 pyruvate. It catalyses the reaction oxaloacetate + H(+) = pyruvate + CO2. Its function is as follows. Catalyzes the aldol cleavage of 4-hydroxy-4-methyl-2-oxoglutarate (HMG) into 2 molecules of pyruvate. Also contains a secondary oxaloacetate (OAA) decarboxylase activity due to the common pyruvate enolate transition state formed following C-C bond cleavage in the retro-aldol and decarboxylation reactions. In Mycobacterium leprae (strain Br4923), this protein is Putative 4-hydroxy-4-methyl-2-oxoglutarate aldolase.